Here is a 151-residue protein sequence, read N- to C-terminus: Protein SprT-like (151 aa).

In terms of domain architecture, SprT-like spans 7 to 146 (QSLTESIAIK…CGRCGGILKL (140 aa)). Position 67 (His67) interacts with Zn(2+). Residue Glu68 is part of the active site. His71 contributes to the Zn(2+) binding site.

Belongs to the SprT family. The cofactor is Zn(2+).

The protein localises to the cytoplasm. The chain is Protein SprT-like from Staphylococcus epidermidis (strain ATCC 35984 / DSM 28319 / BCRC 17069 / CCUG 31568 / BM 3577 / RP62A).